The chain runs to 155 residues: MSRRGTAEEKTAKSDPIYRNRLVNMLVNRILKHGKKSLAYQIIYRSVKKIQQKTETNPLSVLRQAIRGVTPDIAVKARRVGGSTHQVPIEIGSTQGKALAIRWLLGASRKRPGRNMAFKLSSELVDAAKGSGDAIRKKEETHRMAEANRAFAHFR.

The protein belongs to the universal ribosomal protein uS7 family. As to quaternary structure, part of the 30S ribosomal subunit.

The protein localises to the plastid. The protein resides in the chloroplast. In terms of biological role, one of the primary rRNA binding proteins, it binds directly to 16S rRNA where it nucleates assembly of the head domain of the 30S subunit. This Vitis vinifera (Grape) protein is Small ribosomal subunit protein uS7cz/uS7cy (rps7-A).